We begin with the raw amino-acid sequence, 173 residues long: NADH-quinone oxidoreductase subunit B (173 aa).

Residues C46, C47, C112, and C142 each coordinate [4Fe-4S] cluster.

The protein belongs to the complex I 20 kDa subunit family. NDH-1 is composed of 14 different subunits. Subunits NuoB, C, D, E, F, and G constitute the peripheral sector of the complex. Requires [4Fe-4S] cluster as cofactor.

The protein resides in the cell membrane. It carries out the reaction a quinone + NADH + 5 H(+)(in) = a quinol + NAD(+) + 4 H(+)(out). In terms of biological role, NDH-1 shuttles electrons from NADH, via FMN and iron-sulfur (Fe-S) centers, to quinones in the respiratory chain. The immediate electron acceptor for the enzyme in this species is believed to be a menaquinone. Couples the redox reaction to proton translocation (for every two electrons transferred, four hydrogen ions are translocated across the cytoplasmic membrane), and thus conserves the redox energy in a proton gradient. In Desulfitobacterium hafniense (strain DSM 10664 / DCB-2), this protein is NADH-quinone oxidoreductase subunit B.